The chain runs to 247 residues: uncharacterized protein (247 aa).

The next 6 helical transmembrane spans lie at 19–39 (IFFT…SIMF), 73–93 (FFTS…AFFI), 106–126 (FLSF…YFII), 155–175 (YIQF…CPLF), 196–216 (YIYF…ILSQ), and 217–237 (FFLF…SCFY).

It belongs to the TatC family.

Its subcellular location is the mitochondrion membrane. This is an uncharacterized protein from Nephroselmis olivacea (Green alga).